The chain runs to 141 residues: Hemoglobin subunit alpha (141 aa).

The region spanning 1-141 (VLSAADKTNV…VATVLTSKYR (141 aa)) is the Globin domain. Serine 3 carries the phosphoserine modification. Lysine 7 is subject to N6-succinyllysine. At threonine 8 the chain carries Phosphothreonine. Residue lysine 11 is modified to N6-succinyllysine. Lysine 16 carries the post-translational modification N6-acetyllysine; alternate. Residue lysine 16 is modified to N6-succinyllysine; alternate. Phosphotyrosine is present on tyrosine 24. Serine 35 bears the Phosphoserine mark. N6-succinyllysine is present on lysine 40. Serine 49 carries the post-translational modification Phosphoserine. Histidine 58 is an O2 binding site. Residue histidine 87 participates in heme b binding. A Phosphoserine modification is found at serine 102. Threonine 108 bears the Phosphothreonine mark. The residue at position 124 (serine 124) is a Phosphoserine. 2 positions are modified to phosphothreonine: threonine 134 and threonine 137. Serine 138 bears the Phosphoserine mark.

Belongs to the globin family. Heterotetramer of two alpha chains and two beta chains. As to expression, red blood cells.

In terms of biological role, involved in oxygen transport from the lung to the various peripheral tissues. Hemopressin acts as an antagonist peptide of the cannabinoid receptor CNR1. Hemopressin-binding efficiently blocks cannabinoid receptor CNR1 and subsequent signaling. The sequence is that of Hemoglobin subunit alpha (HBA) from Ctenodactylus gundi (Northern gundi).